The primary structure comprises 172 residues: Transmembrane protein 91 (172 aa).

Disordered stretches follow at residues 1 to 31 and 55 to 83; these read MDSPSLRELQQPLLEGTECETPAQKPGRHEL and PSVSAGLGEPRPPDVEDMSSSDSDSDWDG. At 1–97 the chain is on the extracellular side; it reads MDSPSLRELQ…SPFLPHDHLG (97 aa). Residues 69–81 show a composition bias toward acidic residues; the sequence is VEDMSSSDSDSDW. The helical transmembrane segment at 98-118 threads the bilayer; that stretch reads LAVFSMLCCFWPVGIAAFCLA. At 119–139 the chain is on the cytoplasmic side; the sequence is QKTNKAWAKGDIQGAGAASRR. The helical transmembrane segment at 140-160 threads the bilayer; the sequence is AFLLGVLAVGLGVCTYAAALV. Residues 161-172 lie on the Extracellular side of the membrane; sequence TLAAYLASRDPP.

Belongs to the CD225/Dispanin family.

It is found in the membrane. This chain is Transmembrane protein 91 (TMEM91), found in Homo sapiens (Human).